The chain runs to 506 residues: Ubiquitin carboxyl-terminal hydrolase 22 (506 aa).

A UBP-type zinc finger spans residues 4 to 121 (AGCSHVNGFK…KEEQRKAWKL (118 aa)). 12 residues coordinate Zn(2+): cysteine 6, histidine 8, cysteine 46, cysteine 49, cysteine 59, cysteine 62, cysteine 67, histidine 72, histidine 76, histidine 82, cysteine 95, and cysteine 98. The region spanning 159–501 (RGLINLGNTC…EGYLLFYHKQ (343 aa)) is the USP domain. The active-site Nucleophile is cysteine 168. The Proton acceptor role is filled by histidine 460.

The protein belongs to the peptidase C19 family. UBP8 subfamily. As to quaternary structure, component of some SAGA transcription coactivator-HAT complexes.

The protein resides in the nucleus. The catalysed reaction is Thiol-dependent hydrolysis of ester, thioester, amide, peptide and isopeptide bonds formed by the C-terminal Gly of ubiquitin (a 76-residue protein attached to proteins as an intracellular targeting signal).. Histone deubiquitinating component of the transcription regulatory histone acetylation (HAT) complex SAGA. Catalyzes the deubiquitination of both histones H2A and H2B, thereby acting as a coactivator. Recruited to specific gene promoters by activators, where it is required for transcription. The protein is Ubiquitin carboxyl-terminal hydrolase 22 (usp22) of Danio rerio (Zebrafish).